Here is a 111-residue protein sequence, read N- to C-terminus: Large ribosomal subunit protein uL22 (111 aa).

Belongs to the universal ribosomal protein uL22 family. In terms of assembly, part of the 50S ribosomal subunit.

This protein binds specifically to 23S rRNA; its binding is stimulated by other ribosomal proteins, e.g. L4, L17, and L20. It is important during the early stages of 50S assembly. It makes multiple contacts with different domains of the 23S rRNA in the assembled 50S subunit and ribosome. In terms of biological role, the globular domain of the protein is located near the polypeptide exit tunnel on the outside of the subunit, while an extended beta-hairpin is found that lines the wall of the exit tunnel in the center of the 70S ribosome. This Geotalea uraniireducens (strain Rf4) (Geobacter uraniireducens) protein is Large ribosomal subunit protein uL22.